Reading from the N-terminus, the 196-residue chain is Nucleoid occlusion factor SlmA (196 aa).

The HTH tetR-type domain occupies 7-68 (PNRRDEILQA…GLIEFIEESI (62 aa)). The H-T-H motif DNA-binding region spans 31-50 (TTAKLAKQVGVSEAALYRHF). The stretch at 71-93 (RVNRILEDEKDTLKRIELLLKLL) forms a coiled coil.

It belongs to the nucleoid occlusion factor SlmA family. In terms of assembly, homodimer. Interacts with FtsZ.

It is found in the cytoplasm. The protein resides in the nucleoid. Functionally, required for nucleoid occlusion (NO) phenomenon, which prevents Z-ring formation and cell division over the nucleoid. Acts as a DNA-associated cell division inhibitor that binds simultaneously chromosomal DNA and FtsZ, and disrupts the assembly of FtsZ polymers. SlmA-DNA-binding sequences (SBS) are dispersed on non-Ter regions of the chromosome, preventing FtsZ polymerization at these regions. This is Nucleoid occlusion factor SlmA from Aliivibrio fischeri (strain MJ11) (Vibrio fischeri).